The following is a 211-amino-acid chain: CASP-like protein 3A1 (211 aa).

Over 1-45 the chain is Cytoplasmic; the sequence is MGSIGNGRSDSVVGIQMPPAGSKMVLEPEALQVTTSPVPRWPRLG. A helical transmembrane segment spans residues 46–66; the sequence is VVMVATRAVAMVMALLSMSLM. At 67–95 the chain is on the extracellular side; sequence VSSKQRGILTIFGIEIPLDANWSFSYSLQ. A glycan (N-linked (GlcNAc...) asparagine) is linked at asparagine 87. The helical transmembrane segment at 96 to 116 threads the bilayer; sequence FLVAMSTASAAYSLAQLLLIA. Residues 117–131 lie on the Cytoplasmic side of the membrane; sequence HKAVKKSPIVPSRRH. A helical membrane pass occupies residues 132–152; the sequence is AWLLFAGDQVFSLAMMSAGSA. Topologically, residues 153-186 are extracellular; sequence AAAVANLNRTGIRHTALPNFCKPLPRFCDLSAVS. Asparagine 160 carries N-linked (GlcNAc...) asparagine glycosylation. A helical membrane pass occupies residues 187–207; sequence IACAFLSCVFLAASAVIDVIW. The Cytoplasmic segment spans residues 208 to 211; the sequence is LSSP.

Belongs to the Casparian strip membrane proteins (CASP) family. As to quaternary structure, homodimer and heterodimers.

The protein localises to the cell membrane. The protein is CASP-like protein 3A1 of Sorghum bicolor (Sorghum).